Reading from the N-terminus, the 544-residue chain is Chaperonin GroEL (544 aa).

Residues 30 to 33, lysine 51, 87 to 91, glycine 415, and aspartate 495 each bind ATP; these read TLGP and DGTTT.

This sequence belongs to the chaperonin (HSP60) family. In terms of assembly, forms a cylinder of 14 subunits composed of two heptameric rings stacked back-to-back. Interacts with the co-chaperonin GroES.

The protein resides in the cytoplasm. It carries out the reaction ATP + H2O + a folded polypeptide = ADP + phosphate + an unfolded polypeptide.. Functionally, together with its co-chaperonin GroES, plays an essential role in assisting protein folding. The GroEL-GroES system forms a nano-cage that allows encapsulation of the non-native substrate proteins and provides a physical environment optimized to promote and accelerate protein folding. The sequence is that of Chaperonin GroEL from Neisseria gonorrhoeae (strain ATCC 700825 / FA 1090).